A 762-amino-acid chain; its full sequence is Endonuclease MutS2 (762 aa).

Residue 329 to 336 coordinates ATP; the sequence is GPNTGGKT. Residues 682-757 form the Smr domain; it reads LNLIGKDVET…GSGVTVVYLE (76 aa).

Belongs to the DNA mismatch repair MutS family. MutS2 subfamily. In terms of assembly, homodimer. Binds to stalled ribosomes, contacting rRNA.

Its function is as follows. Endonuclease that is involved in the suppression of homologous recombination and thus may have a key role in the control of bacterial genetic diversity. Acts as a ribosome collision sensor, splitting the ribosome into its 2 subunits. Detects stalled/collided 70S ribosomes which it binds and splits by an ATP-hydrolysis driven conformational change. Acts upstream of the ribosome quality control system (RQC), a ribosome-associated complex that mediates the extraction of incompletely synthesized nascent chains from stalled ribosomes and their subsequent degradation. Probably generates substrates for RQC. The chain is Endonuclease MutS2 from Aquifex aeolicus (strain VF5).